The following is a 253-amino-acid chain: Aspartic acid-rich protein (253 aa).

The first 22 residues, 1-22 (MYLFIYIFFFFFFFFFFVIVQK), serve as a signal peptide directing secretion. Residues 211–253 (DDFDEEFDDDDDDDDDDDDDDDDDDKDDDLDGDDDGNNDDNDD) form a disordered region.

It belongs to the nucleosome assembly protein (NAP) family.

This is Aspartic acid-rich protein from Plasmodium falciparum (isolate fcm17 / Senegal).